The sequence spans 283 residues: Pantothenate synthetase (283 aa).

26–33 is a binding site for ATP; the sequence is MGNLHDGH. His33 acts as the Proton donor in catalysis. Position 57 (Gln57) interacts with (R)-pantoate. Gln57 contributes to the beta-alanine binding site. Residue 148-151 participates in ATP binding; it reads GKKD. Gln154 provides a ligand contact to (R)-pantoate. Residues Ala177 and 185 to 188 contribute to the ATP site; that span reads LSSR.

It belongs to the pantothenate synthetase family. In terms of assembly, homodimer.

Its subcellular location is the cytoplasm. The catalysed reaction is (R)-pantoate + beta-alanine + ATP = (R)-pantothenate + AMP + diphosphate + H(+). It functions in the pathway cofactor biosynthesis; (R)-pantothenate biosynthesis; (R)-pantothenate from (R)-pantoate and beta-alanine: step 1/1. Its function is as follows. Catalyzes the condensation of pantoate with beta-alanine in an ATP-dependent reaction via a pantoyl-adenylate intermediate. The sequence is that of Pantothenate synthetase from Delftia acidovorans (strain DSM 14801 / SPH-1).